The following is a 103-amino-acid chain: L-rhamnose mutarotase (103 aa).

Tyr18 serves as a coordination point for substrate. His22 acts as the Proton donor in catalysis. Substrate is bound by residues Tyr41 and 76 to 77; that span reads WW.

The protein belongs to the rhamnose mutarotase family. In terms of assembly, homodimer.

The protein localises to the cytoplasm. The catalysed reaction is alpha-L-rhamnose = beta-L-rhamnose. It functions in the pathway carbohydrate metabolism; L-rhamnose metabolism. Functionally, involved in the anomeric conversion of L-rhamnose. This is L-rhamnose mutarotase from Enterococcus faecalis (strain ATCC 700802 / V583).